The chain runs to 74 residues: UPF0291 protein lmo0496 (74 aa).

The protein belongs to the UPF0291 family.

The protein resides in the cytoplasm. This is UPF0291 protein lmo0496 from Listeria monocytogenes serovar 1/2a (strain ATCC BAA-679 / EGD-e).